The sequence spans 358 residues: Phosphoserine aminotransferase (358 aa).

Arg41 is an L-glutamate binding site. Residues 75-76 (AS), Trp100, Thr148, Asp167, and Gln190 each bind pyridoxal 5'-phosphate. N6-(pyridoxal phosphate)lysine is present on Lys191. Position 233 to 234 (233 to 234 (NT)) interacts with pyridoxal 5'-phosphate.

This sequence belongs to the class-V pyridoxal-phosphate-dependent aminotransferase family. SerC subfamily. Homodimer. It depends on pyridoxal 5'-phosphate as a cofactor.

Its subcellular location is the cytoplasm. The catalysed reaction is O-phospho-L-serine + 2-oxoglutarate = 3-phosphooxypyruvate + L-glutamate. It catalyses the reaction 4-(phosphooxy)-L-threonine + 2-oxoglutarate = (R)-3-hydroxy-2-oxo-4-phosphooxybutanoate + L-glutamate. It functions in the pathway amino-acid biosynthesis; L-serine biosynthesis; L-serine from 3-phospho-D-glycerate: step 2/3. Its pathway is cofactor biosynthesis; pyridoxine 5'-phosphate biosynthesis; pyridoxine 5'-phosphate from D-erythrose 4-phosphate: step 3/5. Functionally, catalyzes the reversible conversion of 3-phosphohydroxypyruvate to phosphoserine and of 3-hydroxy-2-oxo-4-phosphonooxybutanoate to phosphohydroxythreonine. This chain is Phosphoserine aminotransferase, found in Campylobacter jejuni (strain RM1221).